Here is a 181-residue protein sequence, read N- to C-terminus: MRLVMLGGPGSGKSTQSHNLSQELKLPVISMGGILREAIANATPLGIKAKPYVERGDLLPDPMMIEFIQQRLVQEDGGQGWILEGYPRTAFQAEELDFLLEDLGQPLDWALYLKIDEATMVERSLNRSLFDDHPEAITTRIGKFHEYTVPLLEYYAAKQNLLTVNAYPEVDQVTKLILARL.

10 to 15 provides a ligand contact to ATP; sequence GSGKST. The segment at 30–59 is NMP; it reads SMGGILREAIANATPLGIKAKPYVERGDLL. AMP-binding positions include Arg-36, 57–59, 85–88, and Gln-92; these read DLL and GYPR. The segment at 126 to 132 is LID; the sequence is NRSLFDD. Arg-127 is an ATP binding site. Arg-140 contributes to the AMP binding site. Pro-168 contacts ATP.

The protein belongs to the adenylate kinase family. As to quaternary structure, monomer.

The protein resides in the cytoplasm. The catalysed reaction is AMP + ATP = 2 ADP. Its pathway is purine metabolism; AMP biosynthesis via salvage pathway; AMP from ADP: step 1/1. Functionally, catalyzes the reversible transfer of the terminal phosphate group between ATP and AMP. Plays an important role in cellular energy homeostasis and in adenine nucleotide metabolism. This Synechocystis sp. (strain ATCC 27184 / PCC 6803 / Kazusa) protein is Adenylate kinase 2.